Reading from the N-terminus, the 482-residue chain is Glutamate--tRNA ligase 2 (482 aa).

Positions 8–18 match the 'HIGH' region motif; that stretch reads PSPTGQLHIGG. Positions 249-253 match the 'KMSKS' region motif; the sequence is KLSKR. ATP is bound at residue lysine 252.

It belongs to the class-I aminoacyl-tRNA synthetase family. Glutamate--tRNA ligase type 1 subfamily. As to quaternary structure, monomer.

The protein resides in the cytoplasm. It carries out the reaction tRNA(Glu) + L-glutamate + ATP = L-glutamyl-tRNA(Glu) + AMP + diphosphate. In terms of biological role, catalyzes the attachment of glutamate to tRNA(Glu) in a two-step reaction: glutamate is first activated by ATP to form Glu-AMP and then transferred to the acceptor end of tRNA(Glu). The protein is Glutamate--tRNA ligase 2 of Caldicellulosiruptor saccharolyticus (strain ATCC 43494 / DSM 8903 / Tp8T 6331).